The following is a 312-amino-acid chain: Olfactory receptor 1500 (312 aa).

Residues 1-25 (MTGNNQTLILEFLLLGLPIPSEYHL) are Extracellular-facing. The N-linked (GlcNAc...) asparagine glycan is linked to Asn5. Residues 26–49 (LFYALFLAMYLTIILGNLLIIVLV) form a helical membrane-spanning segment. Residues 50–57 (RLDSHLHM) lie on the Cytoplasmic side of the membrane. A helical transmembrane segment spans residues 58–79 (PMYLFLSNLSFSDLCFSSVTMP). At 80-100 (KLLQNMQSQVPSISYTGCLTQ) the chain is on the extracellular side. Cys97 and Cys189 are disulfide-bonded. The helical transmembrane segment at 101 to 120 (LYFFMVFGDMESFLLVVMAY) threads the bilayer. At 121–139 (DRYVAICFPLRYTTIMSTK) the chain is on the cytoplasmic side. The helical transmembrane segment at 140 to 158 (FCASLVLLLWMLTMTHALL) threads the bilayer. Over 159–196 (HTLLIARLSFCEKNVILHFFCDISALLKLSCSDIYVNE) the chain is Extracellular. A helical membrane pass occupies residues 197–219 (LMIYILGGLIIIIPFLLIVMSYV). Over 220–236 (RIFFSILKFPSIQDIYK) the chain is Cytoplasmic. A helical transmembrane segment spans residues 237–260 (VFSTCGSHLSVVTLFYGTIFGIYL). The Extracellular portion of the chain corresponds to 261–272 (CPSGNNSTVKEI). The chain crosses the membrane as a helical span at residues 273–292 (AMAMMYTVVTPMLNPFIYSL). Residues 293–312 (RNRDMKRALIRVICTKKISL) are Cytoplasmic-facing.

The protein belongs to the G-protein coupled receptor 1 family. As to expression, olfactory epithelium.

The protein localises to the cell membrane. Its function is as follows. Odorant receptor. The sequence is that of Olfactory receptor 1500 (Olr1500) from Rattus norvegicus (Rat).